The chain runs to 204 residues: N-(5'-phosphoribosyl)anthranilate isomerase (204 aa).

It belongs to the TrpF family.

It carries out the reaction N-(5-phospho-beta-D-ribosyl)anthranilate = 1-(2-carboxyphenylamino)-1-deoxy-D-ribulose 5-phosphate. The protein operates within amino-acid biosynthesis; L-tryptophan biosynthesis; L-tryptophan from chorismate: step 3/5. The sequence is that of N-(5'-phosphoribosyl)anthranilate isomerase from Bacillus cereus (strain AH187).